An 80-amino-acid polypeptide reads, in one-letter code: uncharacterized protein (80 aa).

The first 15 residues, 1-15, serve as a signal peptide directing secretion; it reads MEVIVVIVVIVVVIA. Low complexity predominate over residues 23–44; sequence NSNSNSNNSSDSSNESNNSDSS. A disordered region spans residues 23 to 52; the sequence is NSNSNSNNSSDSSNESNNSDSSKNGGSDIY. Residues N29, N30, N36, N39, and N64 are each glycosylated (N-linked (GlcNAc...) asparagine).

It localises to the secreted. This is an uncharacterized protein from Dictyostelium discoideum (Social amoeba).